The sequence spans 333 residues: Chemokine XC receptor 1 (333 aa).

Over 1-31 (MESSGNPESTTFFYYDLQSQPCENQAWVFAT) the chain is Extracellular. Residues 32-59 (LATTVLYCLVFLLSLVGNSLVLWVLVKY) traverse the membrane as a helical segment. Over 60-69 (ESLESLTNIF) the chain is Cytoplasmic. A helical transmembrane segment spans residues 70–89 (ILNLCLSDLVFACLLPVWIS). Over 90–103 (PYHWGWVLGDFLCK) the chain is Extracellular. Cys-102 and Cys-175 form a disulfide bridge. A helical membrane pass occupies residues 104-125 (LLNMIFSISLYSSIFFLTIMTI). Topologically, residues 126 to 142 (HRYLSVVSPLSTLRVPT) are cytoplasmic. A helical membrane pass occupies residues 143-167 (LRCRVLVTMAVWVASILSSILDTIF). At 168-190 (HKVLSSGCDYSELTWYLTSVYQH) the chain is on the extracellular side. A helical membrane pass occupies residues 191 to 209 (NLFFLLSLGIILFCYVEIL). Residues 210 to 225 (RTLFRSRSKRRHRTVK) are Cytoplasmic-facing. A helical transmembrane segment spans residues 226–250 (LIFAIVVAYFLSWGPYNFTLFLQTL). Residues 251-267 (FRTQIIRSCEAKQQLEY) are Extracellular-facing. A helical membrane pass occupies residues 268 to 291 (ALLICRNLAFSHCCFNPVLYVFVG). The Cytoplasmic segment spans residues 292–333 (VKFRTHLKHVLRQFWFCRLQAPSPASIPHSPGAFAYEGASFY).

It belongs to the G-protein coupled receptor 1 family.

The protein localises to the cell membrane. In terms of biological role, receptor for chemokines SCYC1 and SCYC2. Subsequently transduces a signal by increasing the intracellular calcium ions level. Receptor for XCL1/Lymphotactin. The sequence is that of Chemokine XC receptor 1 (XCR1) from Homo sapiens (Human).